We begin with the raw amino-acid sequence, 203 residues long: ATP synthase subunit b (203 aa).

A helical membrane pass occupies residues 14-34 (FVWPLLGAGLLLAAEGVAWAS).

It belongs to the ATPase B chain family. In terms of assembly, F-type ATPases have 2 components, F(1) - the catalytic core - and F(0) - the membrane proton channel. F(1) has five subunits: alpha(3), beta(3), gamma(1), delta(1), epsilon(1). F(0) has three main subunits: a(1), b(2) and c(10-14). The alpha and beta chains form an alternating ring which encloses part of the gamma chain. F(1) is attached to F(0) by a central stalk formed by the gamma and epsilon chains, while a peripheral stalk is formed by the delta and b chains.

The protein localises to the cell inner membrane. Its function is as follows. F(1)F(0) ATP synthase produces ATP from ADP in the presence of a proton or sodium gradient. F-type ATPases consist of two structural domains, F(1) containing the extramembraneous catalytic core and F(0) containing the membrane proton channel, linked together by a central stalk and a peripheral stalk. During catalysis, ATP synthesis in the catalytic domain of F(1) is coupled via a rotary mechanism of the central stalk subunits to proton translocation. In terms of biological role, component of the F(0) channel, it forms part of the peripheral stalk, linking F(1) to F(0). This is ATP synthase subunit b from Syntrophobacter fumaroxidans (strain DSM 10017 / MPOB).